A 543-amino-acid polypeptide reads, in one-letter code: Phosphoenolpyruvate carboxykinase (ATP) (543 aa).

Residue 244-251 (GLSGTGKT) participates in ATP binding.

This sequence belongs to the phosphoenolpyruvate carboxykinase (ATP) family.

The enzyme catalyses oxaloacetate + ATP = phosphoenolpyruvate + ADP + CO2. Its pathway is carbohydrate biosynthesis; gluconeogenesis. The polypeptide is Phosphoenolpyruvate carboxykinase (ATP) (PCK1) (Kluyveromyces lactis (strain ATCC 8585 / CBS 2359 / DSM 70799 / NBRC 1267 / NRRL Y-1140 / WM37) (Yeast)).